Reading from the N-terminus, the 445-residue chain is CBL-interacting protein kinase 3 (445 aa).

The region spanning 19–274 is the Protein kinase domain; that stretch reads YELGRAIGQG…TSQVLQDQWF (256 aa). ATP is bound by residues 25 to 33 and K48; that span reads IGQGTFAKV. Catalysis depends on D142, which acts as the Proton acceptor. The activation loop stretch occupies residues 160–189; sequence DFGLSAISEQVKADGLLHTTCGTPNYVAPE. Residues 309-336 form the NAF domain; the sequence is AMEEQPTLMNAFELISLNKGLNLDNFFE. The tract at residues 342-371 is PPI; the sequence is KRETRFTSQCPPKEIINRIEEAANLLGFNI.

The protein belongs to the protein kinase superfamily. CAMK Ser/Thr protein kinase family. SNF1 subfamily. The cofactor is Mn(2+).

The catalysed reaction is L-seryl-[protein] + ATP = O-phospho-L-seryl-[protein] + ADP + H(+). The enzyme catalyses L-threonyl-[protein] + ATP = O-phospho-L-threonyl-[protein] + ADP + H(+). Functionally, CIPK serine-threonine protein kinases interact with CBL proteins. Binding of a CBL protein to the regulatory NAF domain of CIPK protein lead to the activation of the kinase in a calcium-dependent manner. In Oryza sativa subsp. japonica (Rice), this protein is CBL-interacting protein kinase 3 (CIPK3).